The sequence spans 145 residues: uncharacterized protein (145 aa).

This is an uncharacterized protein from Deinococcus radiodurans (strain ATCC 13939 / DSM 20539 / JCM 16871 / CCUG 27074 / LMG 4051 / NBRC 15346 / NCIMB 9279 / VKM B-1422 / R1).